Consider the following 682-residue polypeptide: Potassium-transporting ATPase ATP-binding subunit (682 aa).

A run of 4 helical transmembrane segments spans residues 44 to 64 (VMAV…SGHG), 66 to 86 (AGFG…GNFA), 233 to 253 (LTFL…GVTL), and 257 to 277 (LLIA…LPAI). Asp-310 (4-aspartylphosphate intermediate) is an active-site residue. ATP contacts are provided by residues Asp-347, Glu-351, 377–384 (FTAQTRMS), and Lys-395. Positions 518 and 522 each coordinate Mg(2+). 3 helical membrane-spanning segments follow: residues 588-608 (FAIL…LNVM), 616-636 (AVLA…PLAL), and 658-678 (GLGG…ALVA).

It belongs to the cation transport ATPase (P-type) (TC 3.A.3) family. Type IA subfamily. The system is composed of three essential subunits: KdpA, KdpB and KdpC.

Its subcellular location is the cell inner membrane. The enzyme catalyses K(+)(out) + ATP + H2O = K(+)(in) + ADP + phosphate + H(+). Its function is as follows. Part of the high-affinity ATP-driven potassium transport (or Kdp) system, which catalyzes the hydrolysis of ATP coupled with the electrogenic transport of potassium into the cytoplasm. This subunit is responsible for energy coupling to the transport system and for the release of the potassium ions to the cytoplasm. The protein is Potassium-transporting ATPase ATP-binding subunit of Xanthomonas campestris pv. campestris (strain ATCC 33913 / DSM 3586 / NCPPB 528 / LMG 568 / P 25).